Consider the following 459-residue polypeptide: Cysteine--tRNA ligase (459 aa).

Cys-28 contacts Zn(2+). A 'HIGH' region motif is present at residues 30–40 (VTVYDLCHFGH). 3 residues coordinate Zn(2+): Cys-209, His-234, and Glu-238. A 'KMSKS' region motif is present at residues 266-270 (KMSKS). Lys-269 contributes to the ATP binding site.

This sequence belongs to the class-I aminoacyl-tRNA synthetase family. In terms of assembly, monomer. Zn(2+) serves as cofactor.

It is found in the cytoplasm. It catalyses the reaction tRNA(Cys) + L-cysteine + ATP = L-cysteinyl-tRNA(Cys) + AMP + diphosphate. The protein is Cysteine--tRNA ligase of Actinobacillus succinogenes (strain ATCC 55618 / DSM 22257 / CCUG 43843 / 130Z).